A 204-amino-acid polypeptide reads, in one-letter code: tRNA (pseudouridine(54)-N(1))-methyltransferase (204 aa).

Residues L130, G157, 180–185 (LSPLEL), and C190 each bind S-adenosyl-L-methionine.

Belongs to the methyltransferase superfamily. TrmY family. In terms of assembly, homodimer.

The protein localises to the cytoplasm. The enzyme catalyses pseudouridine(54) in tRNA + S-adenosyl-L-methionine = N(1)-methylpseudouridine(54) in tRNA + S-adenosyl-L-homocysteine + H(+). Specifically catalyzes the N1-methylation of pseudouridine at position 54 (Psi54) in tRNAs. The sequence is that of tRNA (pseudouridine(54)-N(1))-methyltransferase from Methanococcus aeolicus (strain ATCC BAA-1280 / DSM 17508 / OCM 812 / Nankai-3).